Reading from the N-terminus, the 452-residue chain is Cobyrinate a,c-diamide synthase (452 aa).

Residues 248 to 441 enclose the GATase cobBQ-type domain; it reads RVAYALDAAF…LHIHFYQNLA (194 aa). The Nucleophile role is filled by cysteine 330.

This sequence belongs to the CobB/CbiA family. Mg(2+) serves as cofactor.

It carries out the reaction cob(II)yrinate + 2 L-glutamine + 2 ATP + 2 H2O = cob(II)yrinate a,c diamide + 2 L-glutamate + 2 ADP + 2 phosphate + 2 H(+). It participates in cofactor biosynthesis; adenosylcobalamin biosynthesis; cob(II)yrinate a,c-diamide from sirohydrochlorin (anaerobic route): step 10/10. Functionally, catalyzes the ATP-dependent amidation of the two carboxylate groups at positions a and c of cobyrinate, using either L-glutamine or ammonia as the nitrogen source. The protein is Cobyrinate a,c-diamide synthase of Listeria monocytogenes serovar 1/2a (strain ATCC BAA-679 / EGD-e).